Here is a 485-residue protein sequence, read N- to C-terminus: Zinc finger protein 577 (485 aa).

Residues 1–21 form a disordered region; the sequence is MKNATIVMSVRREQGSSSGEG. Positions 23–94 constitute a KRAB domain; the sequence is LSFEDVAVGF…EGAAHSQICP (72 aa). The C2H2-type 1; degenerate zinc-finger motif lies at 158–180; that stretch reads HECSVCGRAFSRKAQLIQHQRTE. 7 C2H2-type zinc fingers span residues 186–208, 214–236, 242–264, 270–292, 298–320, 326–348, and 354–376; these read HGCG…QRTH, HECS…QRTH, YRCS…QRSH, YGCS…QRLH, YKCS…QRIH, YECS…QRTH, and YSCR…EKTH.

Belongs to the krueppel C2H2-type zinc-finger protein family.

It is found in the nucleus. In terms of biological role, may be involved in transcriptional regulation. The chain is Zinc finger protein 577 (ZNF577) from Homo sapiens (Human).